The primary structure comprises 490 residues: Bifunctional protein HldE (490 aa).

The ribokinase stretch occupies residues 1–330; the sequence is MERKNVESLF…GSLGFQHGEG (330 aa). 205–208 lines the ATP pocket; that stretch reads NRKE. D275 is a catalytic residue. The cytidylyltransferase stretch occupies residues 356-490; sequence FTNGCFDLLH…EKILKAYGEE (135 aa).

The protein in the N-terminal section; belongs to the carbohydrate kinase PfkB family. It in the C-terminal section; belongs to the cytidylyltransferase family. In terms of assembly, homodimer.

It catalyses the reaction D-glycero-beta-D-manno-heptose 7-phosphate + ATP = D-glycero-beta-D-manno-heptose 1,7-bisphosphate + ADP + H(+). The catalysed reaction is D-glycero-beta-D-manno-heptose 1-phosphate + ATP + H(+) = ADP-D-glycero-beta-D-manno-heptose + diphosphate. It participates in nucleotide-sugar biosynthesis; ADP-L-glycero-beta-D-manno-heptose biosynthesis; ADP-L-glycero-beta-D-manno-heptose from D-glycero-beta-D-manno-heptose 7-phosphate: step 1/4. The protein operates within nucleotide-sugar biosynthesis; ADP-L-glycero-beta-D-manno-heptose biosynthesis; ADP-L-glycero-beta-D-manno-heptose from D-glycero-beta-D-manno-heptose 7-phosphate: step 3/4. In terms of biological role, catalyzes the phosphorylation of D-glycero-D-manno-heptose 7-phosphate at the C-1 position to selectively form D-glycero-beta-D-manno-heptose-1,7-bisphosphate. Catalyzes the ADP transfer from ATP to D-glycero-beta-D-manno-heptose 1-phosphate, yielding ADP-D-glycero-beta-D-manno-heptose. This Geobacter sulfurreducens (strain ATCC 51573 / DSM 12127 / PCA) protein is Bifunctional protein HldE.